The following is a 335-amino-acid chain: Galactosylgalactosylxylosylprotein 3-beta-glucuronosyltransferase 1 (335 aa).

Residues 1–6 (MPKRRD) lie on the Cytoplasmic side of the membrane. The segment at 3-5 (KRR) is essential for transport from endoplasmic reticulum to Golgi apparatus and interaction with SAR1A. A helical; Signal-anchor for type II membrane protein membrane pass occupies residues 7 to 27 (ILAIVLIVLPWTLLVTVWHQS). Topologically, residues 28–335 (TIAPLLTTHK…KGFTDPTVEI (308 aa)) are lumenal. 92–94 (PTY) lines the UDP-alpha-D-glucuronate pocket. 2 positions are modified to phosphothreonine: Thr104 and Thr109. Residue Asp123 participates in UDP-alpha-D-glucuronate binding. A glycan (N-linked (GlcNAc...) asparagine) is linked at Asn141. UDP-alpha-D-glucuronate contacts are provided by Arg166 and Arg171. Residue Asn185 is glycosylated (N-linked (GlcNAc...) asparagine). Position 196–198 (196–198 (DDD)) interacts with UDP-alpha-D-glucuronate. Asp198 contacts Mn(2+). Positions 246 to 255 (FDPHRPFAID) are interaction with galactose moiety of substrate glycoprotein. Glu285 (proton donor/acceptor) is an active-site residue. An N-linked (GlcNAc...) asparagine glycan is attached at Asn304. UDP-alpha-D-glucuronate is bound at residue 312-314 (HTR).

The protein belongs to the glycosyltransferase 43 family. As to quaternary structure, homodimer. Interacts with SAR1A. Mn(2+) serves as cofactor. In terms of processing, the soluble form derives from the membrane form by proteolytic processing.

It localises to the golgi apparatus membrane. Its subcellular location is the secreted. The enzyme catalyses 3-O-(beta-D-galactosyl-(1-&gt;3)-beta-D-galactosyl-(1-&gt;4)-beta-D-xylosyl)-L-seryl-[protein] + UDP-alpha-D-glucuronate = 3-O-(beta-D-GlcA-(1-&gt;3)-beta-D-Gal-(1-&gt;3)-beta-D-Gal-(1-&gt;4)-beta-D-Xyl)-L-seryl-[protein] + UDP + H(+). It participates in protein modification; protein glycosylation. Its function is as follows. Involved in the biosynthesis of L2/HNK-1 carbohydrate epitope on glycoproteins. Can also play a role in glycosaminoglycan biosynthesis. Substrates include asialo-orosomucoid (ASOR), asialo-fetuin, and asialo-neural cell adhesion molecule. Requires sphingomyelin for activity: stearoyl-sphingomyelin was the most effective, followed by palmitoyl-sphingomyelin and lignoceroyl-sphingomyelin. Activity was demonstrated only for sphingomyelin with a saturated fatty acid and not for that with an unsaturated fatty acid, regardless of the length of the acyl group. This chain is Galactosylgalactosylxylosylprotein 3-beta-glucuronosyltransferase 1, found in Canis lupus familiaris (Dog).